The primary structure comprises 825 residues: Arabinolytic transcriptional activator araR (825 aa).

Positions 1-17 (MASSHQGNGTVPNSQTD) are enriched in polar residues. The segment at 1–28 (MASSHQGNGTVPNSQTDAPPDSSTKRRW) is disordered. A DNA-binding region (zn(2)-C6 fungal-type) is located at residues 35–61 (CDSCHARRVRCDRQFPCSRCLRSEITC). A disordered region spans residues 117–152 (STFHHRSPPANAPTVSAPSVDGRRSQTDPQLPVRRP).

The protein belongs to the xlnR/xlr1 family. araR subfamily.

Its subcellular location is the nucleus. In terms of biological role, transcriptional activator of the arabinanolytic system. Involved in the regulation of extracellular arabinanolytic genes and in the regulation of the intracellular activities of L-arabinose catabolic genes in the pentose catabolic pathway (PCP) in response to the presence of L-arabinose. This Emericella nidulans (strain FGSC A4 / ATCC 38163 / CBS 112.46 / NRRL 194 / M139) (Aspergillus nidulans) protein is Arabinolytic transcriptional activator araR.